We begin with the raw amino-acid sequence, 155 residues long: Small ribosomal subunit protein uS7 (155 aa).

This sequence belongs to the universal ribosomal protein uS7 family. In terms of assembly, part of the 30S ribosomal subunit. Contacts proteins S9 and S11.

Its function is as follows. One of the primary rRNA binding proteins, it binds directly to 16S rRNA where it nucleates assembly of the head domain of the 30S subunit. Is located at the subunit interface close to the decoding center, probably blocks exit of the E-site tRNA. In Xylella fastidiosa (strain 9a5c), this protein is Small ribosomal subunit protein uS7.